Consider the following 340-residue polypeptide: Beta-ketoacyl-[acyl-carrier-protein] synthase III (340 aa).

Catalysis depends on residues C119 and H260. The ACP-binding stretch occupies residues 261–265 (QANYR). Residue N290 is part of the active site.

Belongs to the thiolase-like superfamily. FabH family. In terms of assembly, homodimer.

The protein resides in the cytoplasm. The catalysed reaction is malonyl-[ACP] + acetyl-CoA + H(+) = 3-oxobutanoyl-[ACP] + CO2 + CoA. It functions in the pathway lipid metabolism; fatty acid biosynthesis. Functionally, catalyzes the condensation reaction of fatty acid synthesis by the addition to an acyl acceptor of two carbons from malonyl-ACP. Catalyzes the first condensation reaction which initiates fatty acid synthesis and may therefore play a role in governing the total rate of fatty acid production. Possesses both acetoacetyl-ACP synthase and acetyl transacylase activities. Its substrate specificity determines the biosynthesis of branched-chain and/or straight-chain of fatty acids. The protein is Beta-ketoacyl-[acyl-carrier-protein] synthase III of Sulfurovum sp. (strain NBC37-1).